Consider the following 378-residue polypeptide: Ribosomal RNA large subunit methyltransferase G (378 aa).

The protein belongs to the methyltransferase superfamily. RlmG family.

It is found in the cytoplasm. The enzyme catalyses guanosine(1835) in 23S rRNA + S-adenosyl-L-methionine = N(2)-methylguanosine(1835) in 23S rRNA + S-adenosyl-L-homocysteine + H(+). In terms of biological role, specifically methylates the guanine in position 1835 (m2G1835) of 23S rRNA. In Escherichia coli O157:H7, this protein is Ribosomal RNA large subunit methyltransferase G.